Reading from the N-terminus, the 261-residue chain is Malonyl-[acyl-carrier protein] O-methyltransferase (261 aa).

This sequence belongs to the methyltransferase superfamily.

It carries out the reaction malonyl-[ACP] + S-adenosyl-L-methionine = malonyl-[ACP] methyl ester + S-adenosyl-L-homocysteine. Its pathway is cofactor biosynthesis; biotin biosynthesis. Converts the free carboxyl group of a malonyl-thioester to its methyl ester by transfer of a methyl group from S-adenosyl-L-methionine (SAM). It allows to synthesize pimeloyl-ACP via the fatty acid synthetic pathway. This Bacteroides thetaiotaomicron (strain ATCC 29148 / DSM 2079 / JCM 5827 / CCUG 10774 / NCTC 10582 / VPI-5482 / E50) protein is Malonyl-[acyl-carrier protein] O-methyltransferase.